The chain runs to 647 residues: Leucine aminopeptidase 2 (647 aa).

Residues 169–171 (QCQ) and 295–300 (PYGGME) contribute to the substrate site. Histidine 324 provides a ligand contact to Zn(2+). The Proton acceptor role is filled by glutamate 325. 2 residues coordinate Zn(2+): histidine 328 and glutamate 347. The active-site Proton donor is the tyrosine 418.

This sequence belongs to the peptidase M1 family. It depends on Zn(2+) as a cofactor.

Its subcellular location is the cytoplasm. It localises to the nucleus. The enzyme catalyses an epoxide + H2O = an ethanediol. In terms of biological role, aminopeptidase that preferentially cleaves di- and tripeptides. Also has low epoxide hydrolase activity (in vitro). Can hydrolyze the epoxide leukotriene LTA(4) but it forms preferentially 5,6-dihydroxy-7,9,11,14-eicosatetraenoic acid rather than the cytokine leukotriene B(4) as the product compared to the homologous mammalian enzyme (in vitro). This chain is Leucine aminopeptidase 2, found in Yarrowia lipolytica (strain CLIB 122 / E 150) (Yeast).